The chain runs to 758 residues: 5-methyltetrahydropteroyltriglutamate--homocysteine methyltransferase (758 aa).

5-methyltetrahydropteroyltri-L-glutamate contacts are provided by residues 17–20 and K117; that span reads RELK. Residues 434 to 436 and E487 each bind L-homocysteine; that span reads IGS. L-methionine contacts are provided by residues 434–436 and E487; that span reads IGS. 5-methyltetrahydropteroyltri-L-glutamate is bound by residues 518-519 and W564; that span reads RC. D602 lines the L-homocysteine pocket. Residue D602 participates in L-methionine binding. E608 is a binding site for 5-methyltetrahydropteroyltri-L-glutamate. Zn(2+) contacts are provided by H644, C646, and E668. The active-site Proton donor is H697. A Zn(2+)-binding site is contributed by C729.

This sequence belongs to the vitamin-B12 independent methionine synthase family. Zn(2+) serves as cofactor.

It catalyses the reaction 5-methyltetrahydropteroyltri-L-glutamate + L-homocysteine = tetrahydropteroyltri-L-glutamate + L-methionine. Its pathway is amino-acid biosynthesis; L-methionine biosynthesis via de novo pathway; L-methionine from L-homocysteine (MetE route): step 1/1. Catalyzes the transfer of a methyl group from 5-methyltetrahydrofolate to homocysteine resulting in methionine formation. This Serratia proteamaculans (strain 568) protein is 5-methyltetrahydropteroyltriglutamate--homocysteine methyltransferase.